Here is a 230-residue protein sequence, read N- to C-terminus: Ribose-5-phosphate isomerase A (230 aa).

Substrate is bound by residues 29-32 (SGST), 86-89 (DGAD), and 99-102 (KGGG). E108 serves as the catalytic Proton acceptor. K126 contributes to the substrate binding site.

Belongs to the ribose 5-phosphate isomerase family. In terms of assembly, homodimer.

The catalysed reaction is aldehydo-D-ribose 5-phosphate = D-ribulose 5-phosphate. It participates in carbohydrate degradation; pentose phosphate pathway; D-ribose 5-phosphate from D-ribulose 5-phosphate (non-oxidative stage): step 1/1. In terms of biological role, catalyzes the reversible conversion of ribose-5-phosphate to ribulose 5-phosphate. The protein is Ribose-5-phosphate isomerase A of Desulfatibacillum aliphaticivorans.